The sequence spans 376 residues: MSQDVLTLAQDLIARASVTPLDEGCQPLMAKRLAAKGFNIEPMVFEDTTNMWARRGDQGPLFCFAGHTDVVPVGDLNRWHTPPFEPVVIDGYLHGRGAADMKGSLAAMVVATERFVDKHPDHKGSIAFLITSDEEGPFINGTTRVIDTLEARNEKITWSLVGEPSSTHKLGDIVKNGRRGSLTGNLTVKGVQGHVAYPHLADNPIHKAAPALDELARMKWDNGNEFFPPTSFQIANINGGTGASNVIPGSLEVMFNFRYSTEVTAEILIQRVLNILDAHGLDYDISWIFNGLPFLTDAGPLLDATREAIYEITGTETDPQTSGGTSDGRFIAPTGAQVIELGPVNATIHKVNECVKVEDIEQLAKVYERILEKLLC.

H67 is a Zn(2+) binding site. D69 is a catalytic residue. D100 is a binding site for Zn(2+). E134 serves as the catalytic Proton acceptor. Zn(2+) is bound by residues E135, E163, and H349.

This sequence belongs to the peptidase M20A family. DapE subfamily. Homodimer. Requires Zn(2+) as cofactor. Co(2+) serves as cofactor.

The enzyme catalyses N-succinyl-(2S,6S)-2,6-diaminopimelate + H2O = (2S,6S)-2,6-diaminopimelate + succinate. The protein operates within amino-acid biosynthesis; L-lysine biosynthesis via DAP pathway; LL-2,6-diaminopimelate from (S)-tetrahydrodipicolinate (succinylase route): step 3/3. Its function is as follows. Catalyzes the hydrolysis of N-succinyl-L,L-diaminopimelic acid (SDAP), forming succinate and LL-2,6-diaminopimelate (DAP), an intermediate involved in the bacterial biosynthesis of lysine and meso-diaminopimelic acid, an essential component of bacterial cell walls. The chain is Succinyl-diaminopimelate desuccinylase 1 from Shewanella loihica (strain ATCC BAA-1088 / PV-4).